Consider the following 212-residue polypeptide: MGTNKPVVIGIAGGSGSGKTSVTKAIFDHFKGHSILILEQDYYYKDQSHLPMEERLKTNYDHPLAFDNDLLIEHLQQLLAYKQVDKPVYDYTLHTRSEEIIPVEPKDVIILEGILILEDPRLCELMDIKLFVDTDADLRILRRMQRDIKERGRTMDSVIDQYVNVVRPMHNQFIEPSKKFADIIIPEGGQNHVAIDSMVTKIATILEQKVNL.

13-20 lines the ATP pocket; the sequence is GGSGSGKT.

It belongs to the uridine kinase family.

The protein localises to the cytoplasm. The enzyme catalyses uridine + ATP = UMP + ADP + H(+). The catalysed reaction is cytidine + ATP = CMP + ADP + H(+). It participates in pyrimidine metabolism; CTP biosynthesis via salvage pathway; CTP from cytidine: step 1/3. It functions in the pathway pyrimidine metabolism; UMP biosynthesis via salvage pathway; UMP from uridine: step 1/1. The sequence is that of Uridine kinase from Bacillus anthracis (strain A0248).